The primary structure comprises 974 residues: Mediator of RNA polymerase II transcription subunit 16 (974 aa).

The tract at residues 62–92 (ESSSTLSTHSTTTSVNGSTTAGVGSTPNFGG) is disordered. Positions 63–75 (SSSTLSTHSTTTS) are enriched in low complexity. Positions 76–92 (VNGSTTAGVGSTPNFGG) are enriched in polar residues. A Nuclear localization signal motif is present at residues 889–893 (KLPIK).

Belongs to the Mediator complex subunit 16 family. As to quaternary structure, component of the Mediator complex, which is composed of at least 21 subunits that form three structurally distinct submodules. The Mediator head module contains MED6, MED8, MED11, SRB4/MED17, SRB5/MED18, ROX3/MED19, SRB2/MED20 and SRB6/MED22, the middle module contains MED1, MED4, NUT1/MED5, MED7, CSE2/MED9, NUT2/MED10, SRB7/MED21 and SOH1/MED31, and the tail module contains MED2, PGD1/MED3, RGR1/MED14, GAL11/MED15 and SIN4/MED16. The head and the middle modules interact directly with RNA polymerase II, whereas the elongated tail module interacts with gene-specific regulatory proteins. Interacts with HOG1. Post-translationally, phosphorylated by KIN28.

It localises to the nucleus. Component of the Mediator complex, a coactivator involved in the regulated transcription of nearly all RNA polymerase II-dependent genes. Mediator functions as a bridge to convey information from gene-specific regulatory proteins to the basal RNA polymerase II transcription machinery. The Mediator complex, having a compact conformation in its free form, is recruited to promoters by direct interactions with regulatory proteins and serves for the assembly of a functional preinitiation complex with RNA polymerase II and the general transcription factors. The Mediator complex unfolds to an extended conformation and partially surrounds RNA polymerase II, specifically interacting with the unphosphorylated form of the C-terminal domain (CTD) of RNA polymerase II. The Mediator complex dissociates from the RNA polymerase II holoenzyme and stays at the promoter when transcriptional elongation begins. The protein is Mediator of RNA polymerase II transcription subunit 16 (SIN4) of Saccharomyces cerevisiae (strain ATCC 204508 / S288c) (Baker's yeast).